The sequence spans 126 residues: Small ribosomal subunit protein uS12 (126 aa).

D89 is subject to 3-methylthioaspartic acid.

Belongs to the universal ribosomal protein uS12 family. Part of the 30S ribosomal subunit. Contacts proteins S8 and S17. May interact with IF1 in the 30S initiation complex.

Functionally, with S4 and S5 plays an important role in translational accuracy. Its function is as follows. Interacts with and stabilizes bases of the 16S rRNA that are involved in tRNA selection in the A site and with the mRNA backbone. Located at the interface of the 30S and 50S subunits, it traverses the body of the 30S subunit contacting proteins on the other side and probably holding the rRNA structure together. The combined cluster of proteins S8, S12 and S17 appears to hold together the shoulder and platform of the 30S subunit. This chain is Small ribosomal subunit protein uS12, found in Carboxydothermus hydrogenoformans (strain ATCC BAA-161 / DSM 6008 / Z-2901).